Consider the following 1210-residue polypeptide: Homeodomain-interacting protein kinase 1 (1210 aa).

K25 participates in a covalent cross-link: Glycyl lysine isopeptide (Lys-Gly) (interchain with G-Cter in SUMO); alternate. A Glycyl lysine isopeptide (Lys-Gly) (interchain with G-Cter in SUMO2); alternate cross-link involves residue K25. Glycyl lysine isopeptide (Lys-Gly) (interchain with G-Cter in SUMO2) cross-links involve residues K120 and K124. The 329-residue stretch at 190–518 (YEVLEFLGRG…PLKTLNHQFV (329 aa)) folds into the Protein kinase domain. ATP is bound by residues 196–204 (LGRGTFGQV) and K219. The active-site Proton acceptor is D315. The disordered stretch occupies residues 835 to 856 (QQQSSSLPSKKNKQSAPVSSKS). The Nuclear localization signal 1 (NLS1) signature appears at 844-847 (KKNK). Position 872 is a phosphoserine (S872). Residues 885-1093 (PVQDQHQPII…FQHGSPLHST (209 aa)) form an interaction with TP53 region. Residues 891–998 (QPIIIPDTPS…PLKTQLGDCT (108 aa)) form a required for localization to nuclear speckles region. The tract at residues 902-926 (PVSVITIRSDTDEEEDNKYKPNSSS) is SUMO interaction motifs (SIM); required for nuclear localization and kinase activity. The segment at 938-981 (TVNDSPDSDSSLSSPHPTDTLSALRGNSGTLLEGPGRPAADGIG) is disordered. Residues 941–959 (DSPDSDSSLSSPHPTDTLS) are compositionally biased toward low complexity. K991 is covalently cross-linked (Glycyl lysine isopeptide (Lys-Gly) (interchain with G-Cter in SUMO2)). 2 disordered regions span residues 1046 to 1069 (LSQN…APRR) and 1084 to 1104 (FQHG…APAH). Composition is skewed to low complexity over residues 1047-1063 (SQNQ…ERSS) and 1095-1104 (HPHLAPAPAH). Residue S1200 is modified to Phosphoserine. K1203 participates in a covalent cross-link: Glycyl lysine isopeptide (Lys-Gly) (interchain with G-Cter in SUMO).

The protein belongs to the protein kinase superfamily. CMGC Ser/Thr protein kinase family. HIPK subfamily. In terms of assembly, interacts with Nkx1-2, Nkx2-5, MYB, PARK7, DAXX and p53/TP53. Part of a cytoplasmic complex made of HIPK1, DAB2IP and MAP3K5 in response to TNF. This complex formation promotes MAP3K5-JNK activation and subsequent apoptosis. In terms of processing, phosphorylated and activated by JNK1. Autophosphorylated. Post-translationally, sumoylated. When conjugated it is directed to nuclear speckles. SENP1-mediated desumoylation is mediated by TNF in response to stress stimuli, triggering transient translocation from nucleus to cytoplasm. Ubiquitously expressed, with high levels in reproductive tissues. Expressed in the epithelial layer of mammary gland, uterus and epididymis, in the corpus luteum, and in post-meiotic round spermatids.

The protein resides in the nucleus. It localises to the cytoplasm. It is found in the nucleus speckle. It carries out the reaction L-seryl-[protein] + ATP = O-phospho-L-seryl-[protein] + ADP + H(+). It catalyses the reaction L-threonyl-[protein] + ATP = O-phospho-L-threonyl-[protein] + ADP + H(+). Its function is as follows. Serine/threonine-protein kinase involved in transcription regulation and TNF-mediated cellular apoptosis. Plays a role as a corepressor for homeodomain transcription factors. Phosphorylates DAXX and MYB. Phosphorylates DAXX in response to stress, and mediates its translocation from the nucleus to the cytoplasm. Inactivates MYB transcription factor activity by phosphorylation. Prevents MAP3K5-JNK activation in the absence of TNF. TNF triggers its translocation to the cytoplasm in response to stress stimuli, thus activating nuclear MAP3K5-JNK by derepression and promoting apoptosis. May be involved in anti-oxidative stress responses. Involved in the regulation of eye size, lens formation and retinal lamination during late embryogenesis. Promotes angiogenesis and to be involved in erythroid differentiation. May be involved in malignant squamous cell tumor formation. Phosphorylates PAGE4 at 'Thr-51' which is critical for the ability of PAGE4 to potentiate the transcriptional activator activity of JUN. The chain is Homeodomain-interacting protein kinase 1 (Hipk1) from Mus musculus (Mouse).